The following is a 5058-amino-acid chain: ATP-binding cassette sub-family A member 13 (5058 aa).

7 helical membrane-spanning segments follow: residues 23–43 (PVLF…LTVL), 3568–3588 (VGFF…ASMV), 3607–3627 (GVHP…VLTI), 3648–3668 (FIVF…SYLL), 3679–3699 (ALCT…LLVL), 3709–3729 (TFLC…ITFL), and 3752–3772 (FGWV…CGWY). Residues 3842 to 4074 (VTLVSVTKEY…YGQGLRLTLT (233 aa)) enclose the ABC transporter 1 domain. 3875–3882 (GTNGAGKT) provides a ligand contact to ATP. Helical transmembrane passes span 4226 to 4246 (TLAD…LFMV), 4458 to 4478 (VALC…SSVV), 4504 to 4524 (FLYD…VIVA), 4536 to 4556 (LAAT…WMYL), 4568 to 4588 (FISY…ITIM), 4607 to 4627 (VLKW…LVEL), and 4651 to 4671 (MNFL…LLLL). In terms of domain architecture, ABC transporter 2 spans 4718–4956 (LVLYNLSKHY…FGDGYTVKVW (239 aa)). 4754–4761 (GVNGAGKS) contacts ATP.

It belongs to the ABC transporter superfamily. Significantly expressed in the bone marrow, trachea, testis, thyroid and lung as well as in skin fibroblasts.

The protein resides in the cytoplasmic vesicle membrane. The catalysed reaction is cholesterol(in) + ATP + H2O = cholesterol(out) + ADP + phosphate + H(+). Its function is as follows. May mediate the cholesterol and gangliosides transport from the plasma membrane to intracellular vesicles in an ATP hydrolysis dependent manner, thus playing a role in their internalization by endocytic retrograde transport and may also participate in the endocytosis of synaptic vesicle in cortical neurons. This Homo sapiens (Human) protein is ATP-binding cassette sub-family A member 13.